The following is a 76-amino-acid chain: Kappa-actitoxin-Avd4a (76 aa).

An N-terminal signal peptide occupies residues Met-1 to Ala-19. Positions Ala-20–Phe-31 are excised as a propeptide. 3 disulfide bridges follow: Cys-37-Cys-72, Cys-39-Cys-65, and Cys-55-Cys-73.

The protein belongs to the sea anemone type 3 (BDS) potassium channel toxin family. In terms of tissue distribution, highly expressed in the ectodermal tissue from the distal and proximal tentacles, body wall, and oral disk.

It is found in the secreted. The protein resides in the nematocyst. Its function is as follows. Acts as a gating modifier on both Kv and Nav ion channels, and also acts on blood pressure. Voltage-dependently inhibits voltage-gated potassium channels Kv3 (Kv3.1/KCNC1, Kv3.2/KCNC2 and Kv3.4/KCNC4) and slows inactivation of the voltage-gated sodium channel Nav1.7/SCN9A. Inhibits all Kv3.1, Kv3.2 and Kv3.4 by about 50% when tested at a voltage of +40 mV (45%, 48% and 56%, respectively). May act by binding residues in voltage-sensing domains S3b and S4 of Kv3. On sodium channels, tests have been done on human Nav1.7/SCN9A (expressed in HEK293 cells) (EC(50)=3 nM) and rat SCG neurons that mostly carry Nav1.7 channels (EC(50)=300 nM). This toxin also reduces blood pressure. The protein is Kappa-actitoxin-Avd4a of Anemonia viridis (Snakelocks anemone).